Reading from the N-terminus, the 321-residue chain is Olfactory receptor 14J1 (321 aa).

Over 1 to 23 (MVNLTSMSGFLLMGFSDERKLQI) the chain is Extracellular. Asn3 carries N-linked (GlcNAc...) asparagine glycosylation. The helical transmembrane segment at 24–44 (LHALVFLVTYLLALTGNLLII) threads the bilayer. Topologically, residues 45–52 (TIITVDRR) are cytoplasmic. The chain crosses the membrane as a helical span at residues 53-73 (LHSPMYYFLKHLSLLDLCFIS). At 74-97 (VTVPQSIANSLMGNGYISLVQCIL) the chain is on the extracellular side. Cys95 and Cys187 are oxidised to a cystine. A helical membrane pass occupies residues 98-118 (QVFFFIALASSEVAILTVMSY). Residues 119–137 (DRYAAICQPLHYETIMDPR) lie on the Cytoplasmic side of the membrane. A helical transmembrane segment spans residues 138–158 (ACRHAVIAVWIAGGLSGLMHA). The Extracellular portion of the chain corresponds to 159 to 194 (AINFSIPLCGKRVIHQFFCDVPQMLKLACSYEFINE). A helical transmembrane segment spans residues 195-215 (IALAAFTTSAAFICLISIVLS). The Cytoplasmic segment spans residues 216–235 (YIRIFSTVLRIPSAEGRTKV). The helical transmembrane segment at 236–256 (FSTCLPHLFVATFFLSAAGFE) threads the bilayer. The Extracellular portion of the chain corresponds to 257–269 (FLRLPSDSSSTVD). A helical transmembrane segment spans residues 270–290 (LVFSVFYTVIPPTLNPVIYSL). At 291-321 (RNDSMKAALRKMLSKEELPQRKMCLKAMFKL) the chain is on the cytoplasmic side.

Belongs to the G-protein coupled receptor 1 family.

The protein localises to the cell membrane. In terms of biological role, odorant receptor. In Homo sapiens (Human), this protein is Olfactory receptor 14J1 (OR14J1).